The primary structure comprises 661 residues: UvrABC system protein B (661 aa).

A Helicase ATP-binding domain is found at 28–414 (KGVKEGKRHQ…HTDEMIEQII (387 aa)). 41 to 48 (GATGTGKT) is a binding site for ATP. The Beta-hairpin signature appears at 94-117 (YYDYYQPEAYVPSTDTFIEKDASI). Residues 432 to 598 (QIDDLLSEIQ…TINKKIHDVI (167 aa)) enclose the Helicase C-terminal domain. Positions 604–625 (NDETNEKQQTELPKKMTKKERQ) are disordered. A compositionally biased stretch (basic and acidic residues) spans 607–617 (TNEKQQTELPK). Positions 625 to 660 (QKTIENIEKEMKKAAKDLDFEKATELRDMLFELKSE) constitute a UVR domain.

It belongs to the UvrB family. Forms a heterotetramer with UvrA during the search for lesions. Interacts with UvrC in an incision complex.

The protein resides in the cytoplasm. Its function is as follows. The UvrABC repair system catalyzes the recognition and processing of DNA lesions. A damage recognition complex composed of 2 UvrA and 2 UvrB subunits scans DNA for abnormalities. Upon binding of the UvrA(2)B(2) complex to a putative damaged site, the DNA wraps around one UvrB monomer. DNA wrap is dependent on ATP binding by UvrB and probably causes local melting of the DNA helix, facilitating insertion of UvrB beta-hairpin between the DNA strands. Then UvrB probes one DNA strand for the presence of a lesion. If a lesion is found the UvrA subunits dissociate and the UvrB-DNA preincision complex is formed. This complex is subsequently bound by UvrC and the second UvrB is released. If no lesion is found, the DNA wraps around the other UvrB subunit that will check the other stand for damage. This is UvrABC system protein B from Staphylococcus haemolyticus (strain JCSC1435).